Consider the following 163-residue polypeptide: Ribonuclease H (163 aa).

Residues 16–157 (TTSPVEIYCD…CDSLARQAIT (142 aa)) form the RNase H type-1 domain. Asp25, Glu63, Asp85, and Asp149 together coordinate Mg(2+).

It belongs to the RNase H family. As to quaternary structure, monomer. Requires Mg(2+) as cofactor.

The protein resides in the cytoplasm. It catalyses the reaction Endonucleolytic cleavage to 5'-phosphomonoester.. Its function is as follows. Endonuclease that specifically degrades the RNA of RNA-DNA hybrids. In Pelobacter propionicus (strain DSM 2379 / NBRC 103807 / OttBd1), this protein is Ribonuclease H.